The sequence spans 255 residues: MEANSGRLASELNHVQEVLEGYKKKYEEEVALRATAENEFVALKKDVDCAYLRKSDLEANVEALTQEIDFLRRLYEEEIRVLQSHISDTSVVVKMDNSRDLNMHCVITEIKAQYDDIATRSRAEAESWYRSKCEEMKATVIRHGETLRRTKEEINELNRMIQRLTAEVENAKCQNSKLEAAVAQSEQQGEAALSDARCKLAELEGALQKAKQDMACLIREYQEVMNSKLAWTLRSPPTGACWRARSRGCVRALVL.

The IF rod domain maps to 1–255 (MEANSGRLAS…SRGCVRALVL (255 aa)). Coiled-coil stretches lie at residues 19-81 (LEGY…EIRV) and 147-227 (LRRT…VMNS).

Belongs to the intermediate filament family. As to quaternary structure, heterotetramer of two type I and two type II keratins.

The chain is Putative keratin-87 protein (KRT87P) from Homo sapiens (Human).